The chain runs to 281 residues: Deoxyribonuclease-1 (281 aa).

The first 21 residues, 1–21 (MRSEMLTALLTLAVLLQVAGS), serve as a signal peptide directing secretion. Asn-39 carries N-linked (GlcNAc...) asparagine glycosylation. Glu-99 is an active-site residue. A disulfide bond links Cys-122 and Cys-125. The active site involves His-155.

It belongs to the DNase I family. It depends on Ca(2+) as a cofactor. Mg(2+) is required as a cofactor. As to expression, equivalent levels in pancreas and parotid gland, low amounts in kidney, liver, small intestine, stomach and thymus.

It localises to the secreted. Its subcellular location is the zymogen granule. The protein localises to the nucleus envelope. The enzyme catalyses Endonucleolytic cleavage to 5'-phosphodinucleotide and 5'-phosphooligonucleotide end-products.. Functionally, serum endocuclease secreted into body fluids by a wide variety of exocrine and endocrine organs. Expressed by non-hematopoietic tissues and preferentially cleaves protein-free DNA. Among other functions, seems to be involved in cell death by apoptosis. Binds specifically to G-actin and blocks actin polymerization. Preferentially attacks double-stranded DNA and produces oligonucleotides with 5'-phospho and 3'-hydroxy termini. Together with DNASE1L3, plays a key role in degrading neutrophil extracellular traps (NETs). NETs are mainly composed of DNA fibers and are released by neutrophils to bind pathogens during inflammation. Degradation of intravascular NETs by DNASE1 and DNASE1L3 is required to prevent formation of clots that obstruct blood vessels and cause organ damage following inflammation. The sequence is that of Deoxyribonuclease-1 (DNASE1) from Oryctolagus cuniculus (Rabbit).